We begin with the raw amino-acid sequence, 315 residues long: Olfactory receptor 5AN6 (315 aa).

Over 1-29 (MPGGRNSTVITKFILVGFSDFPKLKLVLF) the chain is Extracellular. Residues 30–50 (VIFLGSYLSTVVWNLGLIILI) traverse the membrane as a helical segment. Over 51–54 (RIDP) the chain is Cytoplasmic. A helical membrane pass occupies residues 55–75 (YLHTPMYFFLSNLSFLDFCYI). Over 76–99 (SSTTPKMLSGFFQKSKSISFVGCT) the chain is Extracellular. An intrachain disulfide couples cysteine 98 to cysteine 180. The chain crosses the membrane as a helical span at residues 100 to 120 (MQYFIFSSLGLSECCLLAAMA). Over 121-123 (YDR) the chain is Cytoplasmic. Residues 124–143 (YAAICNPLLYTAIMSPSLCV) traverse the membrane as a helical segment. Residue histidine 144 is a topological domain, extracellular. The chain crosses the membrane as a helical span at residues 145 to 165 (MVVGAYSTGLLGSLIQLCAIL). The Cytoplasmic portion of the chain corresponds to 166–202 (QLHFCGPNIINHFFCDLPQLLVLSCSETFPLQVLKFV). A helical transmembrane segment spans residues 203–223 (IAVIFGVASVIVILISYGYII). Topologically, residues 224–240 (GTILNISSVEGRSKAFN) are extracellular. A helical transmembrane segment spans residues 241–261 (TCASHLTAVTLFFGSGLFVYM). At 262-272 (RPSSNSSQGYD) the chain is on the cytoplasmic side. Residues 273–293 (KMASVFYTVVIPMLNPLIYSL) form a helical membrane-spanning segment. Topologically, residues 294–315 (RNKEIKDALQRCKNKCFSQCHC) are extracellular.

The protein belongs to the G-protein coupled receptor 1 family. Localized in the dorsomedial and ventral region of the olfactory bulb.

The protein resides in the cell membrane. Its function is as follows. Odorant receptor specific for muscone. Muscone-binding causes a conformation change that triggers signaling via G(s)-class of G alpha protein GNAL, activating adenylyl cyclase. The chain is Olfactory receptor 5AN6 from Mus musculus (Mouse).